Here is a 148-residue protein sequence, read N- to C-terminus: Large ribosomal subunit protein bL9 (148 aa).

The protein belongs to the bacterial ribosomal protein bL9 family.

Functionally, binds to the 23S rRNA. In Syntrophotalea carbinolica (strain DSM 2380 / NBRC 103641 / GraBd1) (Pelobacter carbinolicus), this protein is Large ribosomal subunit protein bL9.